Reading from the N-terminus, the 433-residue chain is Cyclin-dependent kinase 15 (433 aa).

Residues 46 to 83 (ASSSTASFHPRGLEAASAQKLKSKRPRSNSDSFQEENL) are disordered. The Protein kinase domain occupies 52–336 (SFHPRGLEAA…SKLPNYNPEW (285 aa)). ATP-binding positions include 58–66 (LEAASAQKL) and Glu-81. Thr-173 (proton acceptor) is an active-site residue.

The protein belongs to the protein kinase superfamily. CMGC Ser/Thr protein kinase family. CDC2/CDKX subfamily. Mg(2+) is required as a cofactor.

The enzyme catalyses L-seryl-[protein] + ATP = O-phospho-L-seryl-[protein] + ADP + H(+). It carries out the reaction L-threonyl-[protein] + ATP = O-phospho-L-threonyl-[protein] + ADP + H(+). In terms of biological role, serine/threonine-protein kinase that acts like an antiapoptotic protein that counters TRAIL/TNFSF10-induced apoptosis by inducing phosphorylation of BIRC5 at 'Thr-34'. The protein is Cyclin-dependent kinase 15 (Cdk15) of Mus musculus (Mouse).